A 248-amino-acid polypeptide reads, in one-letter code: Ribosomal RNA small subunit methyltransferase J (248 aa).

S-adenosyl-L-methionine-binding positions include 101-102, 117-118, 153-154, and Asp-171; these read RD, ER, and SS.

It belongs to the methyltransferase superfamily. RsmJ family.

The protein localises to the cytoplasm. The catalysed reaction is guanosine(1516) in 16S rRNA + S-adenosyl-L-methionine = N(2)-methylguanosine(1516) in 16S rRNA + S-adenosyl-L-homocysteine + H(+). Its function is as follows. Specifically methylates the guanosine in position 1516 of 16S rRNA. The polypeptide is Ribosomal RNA small subunit methyltransferase J (Serratia proteamaculans (strain 568)).